The following is a 931-amino-acid chain: Protein translocase subunit SecA (931 aa).

Residues glutamine 87, 105–109 (GEGKT), and aspartate 515 each bind ATP. The Zn(2+) site is built by cysteine 915, cysteine 917, cysteine 926, and histidine 927.

This sequence belongs to the SecA family. As to quaternary structure, monomer and homodimer. Part of the essential Sec protein translocation apparatus which comprises SecA, SecYEG and auxiliary proteins SecDF-YajC and YidC. It depends on Zn(2+) as a cofactor.

Its subcellular location is the cell inner membrane. The protein localises to the cytoplasm. It carries out the reaction ATP + H2O + cellular proteinSide 1 = ADP + phosphate + cellular proteinSide 2.. Part of the Sec protein translocase complex. Interacts with the SecYEG preprotein conducting channel. Has a central role in coupling the hydrolysis of ATP to the transfer of proteins into and across the cell membrane, serving both as a receptor for the preprotein-SecB complex and as an ATP-driven molecular motor driving the stepwise translocation of polypeptide chains across the membrane. This chain is Protein translocase subunit SecA, found in Burkholderia ambifaria (strain ATCC BAA-244 / DSM 16087 / CCUG 44356 / LMG 19182 / AMMD) (Burkholderia cepacia (strain AMMD)).